Reading from the N-terminus, the 285-residue chain is Seed agglutinin 2 (285 aa).

Residues 1 to 31 (MASYKFKTQNSFLLLLSISFFFLLLLNKVNS) form the signal peptide. Residue N147 is glycosylated (N-linked (GlcNAc...) asparagine). E156 and D158 together coordinate Mn(2+). Ca(2+)-binding residues include D158, N162, and D166. Positions 166 and 171 each coordinate Mn(2+).

It belongs to the leguminous lectin family. Homotetramer. Mostly found in non-glycosylated form. In terms of tissue distribution, expressed in seed.

Functionally, seed lectin. The sequence is that of Seed agglutinin 2 from Robinia pseudoacacia (Black locust).